Reading from the N-terminus, the 264-residue chain is tRNA pseudouridine synthase A (264 aa).

The active-site Nucleophile is the Asp-51. Tyr-109 contributes to the substrate binding site.

This sequence belongs to the tRNA pseudouridine synthase TruA family. As to quaternary structure, homodimer.

The enzyme catalyses uridine(38/39/40) in tRNA = pseudouridine(38/39/40) in tRNA. In terms of biological role, formation of pseudouridine at positions 38, 39 and 40 in the anticodon stem and loop of transfer RNAs. This chain is tRNA pseudouridine synthase A, found in Staphylococcus aureus (strain MRSA252).